The primary structure comprises 220 residues: Carbonic anhydrase (220 aa).

Cys-39, Asp-41, His-98, and Cys-101 together coordinate Zn(2+).

Belongs to the beta-class carbonic anhydrase family. It depends on Zn(2+) as a cofactor.

It carries out the reaction hydrogencarbonate + H(+) = CO2 + H2O. This Pseudomonas aeruginosa (strain ATCC 15692 / DSM 22644 / CIP 104116 / JCM 14847 / LMG 12228 / 1C / PRS 101 / PAO1) protein is Carbonic anhydrase (cynT).